Here is a 240-residue protein sequence, read N- to C-terminus: Aspartate/glutamate leucyltransferase (240 aa).

It belongs to the R-transferase family. Bpt subfamily.

It is found in the cytoplasm. It carries out the reaction N-terminal L-glutamyl-[protein] + L-leucyl-tRNA(Leu) = N-terminal L-leucyl-L-glutamyl-[protein] + tRNA(Leu) + H(+). The enzyme catalyses N-terminal L-aspartyl-[protein] + L-leucyl-tRNA(Leu) = N-terminal L-leucyl-L-aspartyl-[protein] + tRNA(Leu) + H(+). Functions in the N-end rule pathway of protein degradation where it conjugates Leu from its aminoacyl-tRNA to the N-termini of proteins containing an N-terminal aspartate or glutamate. The sequence is that of Aspartate/glutamate leucyltransferase from Bordetella avium (strain 197N).